Consider the following 430-residue polypeptide: Carbamoyl phosphate synthase arginine-specific small chain (430 aa).

Residues 1 to 9 (MLSATKRYL) constitute a mitochondrion transit peptide. The region spanning 219-407 (HIAVLDCGAK…FDNINVYKKS (189 aa)) is the Glutamine amidotransferase type-1 domain. C296 functions as the Nucleophile in the catalytic mechanism. Catalysis depends on residues H380 and E382.

The protein belongs to the CarA family. As to quaternary structure, heterodimer composed of 2 chains; the small (or glutamine) chain promotes the hydrolysis of glutamine to ammonia, which is used by the large (or ammonia) chain to synthesize carbamoyl phosphate.

It localises to the mitochondrion matrix. The enzyme catalyses hydrogencarbonate + L-glutamine + 2 ATP + H2O = carbamoyl phosphate + L-glutamate + 2 ADP + phosphate + 2 H(+). It carries out the reaction L-glutamine + H2O = L-glutamate + NH4(+). Its pathway is amino-acid biosynthesis; L-arginine biosynthesis; carbamoyl phosphate from bicarbonate: step 1/1. Functionally, small subunit of the arginine-specific carbamoyl phosphate synthase (CPSase). CPSase catalyzes the formation of carbamoyl phosphate from the ammonia moiety of glutamine, carbonate, and phosphate donated by ATP, the first step of the arginine biosynthetic pathway. The small subunit (glutamine amidotransferase) binds and cleaves glutamine to supply the large subunit with the substrate ammonia. In Candida albicans (strain SC5314 / ATCC MYA-2876) (Yeast), this protein is Carbamoyl phosphate synthase arginine-specific small chain (CPA1).